The chain runs to 284 residues: Bifunctional protein FolD (284 aa).

Residues 165 to 167 and Ser-190 each bind NADP(+); that span reads GRS.

This sequence belongs to the tetrahydrofolate dehydrogenase/cyclohydrolase family. Homodimer.

The catalysed reaction is (6R)-5,10-methylene-5,6,7,8-tetrahydrofolate + NADP(+) = (6R)-5,10-methenyltetrahydrofolate + NADPH. It catalyses the reaction (6R)-5,10-methenyltetrahydrofolate + H2O = (6R)-10-formyltetrahydrofolate + H(+). It participates in one-carbon metabolism; tetrahydrofolate interconversion. Its function is as follows. Catalyzes the oxidation of 5,10-methylenetetrahydrofolate to 5,10-methenyltetrahydrofolate and then the hydrolysis of 5,10-methenyltetrahydrofolate to 10-formyltetrahydrofolate. The chain is Bifunctional protein FolD from Streptococcus gordonii (strain Challis / ATCC 35105 / BCRC 15272 / CH1 / DL1 / V288).